The chain runs to 545 residues: E3 ubiquitin-protein ligase ipaH9.8 (545 aa).

The segment at 1-242 (MLPINNNFSL…YHGPRIYFSM (242 aa)) is interaction with target proteins. 8 LRR repeats span residues 57–77 (NSDELRLDRLNLSSLPDNLPA), 78–99 (QITLLNVSYNQLTNLPELPVTL), 100–117 (KKLYSASNKLSELPVLPP), 118–139 (ALESLQVQHNELENLPALPDSL), 140–157 (LTMNISYNEIVSLPSLPQ), 158–179 (ALKNLRATRNFLTELPAFSEGN), 182–203 (VVREYFFDRNQISHIPESILNL), and 205–228 (NECSIHISDNPLSSHALQALQRLT). The linker stretch occupies residues 243–250 (SDGQQNTL). The E3 ubiquitin-protein ligase catalytic domain stretch occupies residues 251–545 (HRPLADAVTA…SENGSQLHHS (295 aa)). The 293-residue stretch at 253–545 (PLADAVTAWF…SENGSQLHHS (293 aa)) folds into the NEL domain. The active-site Glycyl thioester intermediate is Cys337.

It belongs to the LRR-containing bacterial E3 ligase family. Also interacts with human and mouse U2AF1 (U2AF35). Post-translationally, ubiquitinated in the presence of host E1 ubiquitin-activating enzyme, E2 ubiquitin-conjugating enzyme and ubiquitin.

The protein resides in the secreted. It is found in the host cytoplasm. It localises to the host nucleus. It catalyses the reaction S-ubiquitinyl-[E2 ubiquitin-conjugating enzyme]-L-cysteine + [acceptor protein]-L-lysine = [E2 ubiquitin-conjugating enzyme]-L-cysteine + N(6)-ubiquitinyl-[acceptor protein]-L-lysine.. Exists in an autoinhibited state in the absence of substrate protein, due to interactions of the leucine-rich repeats with NEL domain. Is activated upon binding to a substrate protein. Effector E3 ubiquitin ligase that interferes with host's ubiquitination pathway and modulates the acute inflammatory responses, thus facilitating bacterial colonization within the host cell. Interacts with IKBKG (NEMO) and TNIP1 (ABIN-1), a ubiquitin-binding adapter protein, which results in TNIP1-dependent 'Lys-27'-linked polyubiquitination of IKBKG. Consequently, polyubiquitinated IKBKG undergoes proteasome-dependent degradation, which perturbs NF-kappa-B activation during bacterial infection. Mediates polyubiquitination of host U2AF1, leading to its proteasomal degradation. Catalyzes 'Lys-48'-linked polyubiquitination and subsequent degradation of a subset of host guanylate-binding proteins (GBP1, GBP2, GBP4 and GBP6), thereby suppressing host cell defense. In contrast, host GBP3 and GBP7 are not ubiquitinated by IpaH9.8. Uses UBE2D2 (UBCH5B) as an E2 ubiquitin-conjugating enzyme. The protein is E3 ubiquitin-protein ligase ipaH9.8 (ipaH9.8) of Shigella boydii serotype 18 (strain CDC 3083-94 / BS512).